The following is a 552-amino-acid chain: Protein FAM234A (552 aa).

The tract at residues 1–40 (MMDDKDLEAEIHPLKNEDKKSQENLGNLPKTEDNLKNKPV) is disordered. At 1–49 (MMDDKDLEAEIHPLKNEDKKSQENLGNLPKTEDNLKNKPVPSRLSRCRT) the chain is on the cytoplasmic side. Residues 8–22 (EAEIHPLKNEDKKSQ) are compositionally biased toward basic and acidic residues. Ser-21 carries the post-translational modification Phosphoserine. The chain crosses the membrane as a helical; Signal-anchor for type II membrane protein span at residues 50 to 70 (VAFFLSLFICLFVVFVLSFII). Residues 71 to 552 (PCPDRPSSED…FSRLRYRSEV (482 aa)) lie on the Extracellular side of the membrane. Residues Asn-116, Asn-119, Asn-314, and Asn-473 are each glycosylated (N-linked (GlcNAc...) asparagine).

The protein belongs to the FAM234 family.

It localises to the membrane. This is Protein FAM234A (Fam234a) from Rattus norvegicus (Rat).